A 397-amino-acid chain; its full sequence is MTEFDVTDGVHDVIEDTELPRRLKDEVLATAEERGVTKSQANEIATAVEAQYLDTRVDPLDPVGTVSAQSIGEPGTQMTMNTFHYAGVAEMDVTQGLPRLIELVDARKTPDTPVMEVYLEDEYAEERERAHEVVWKIEATKILALGDISTNVADMVVRIDLNEDTLQERWPRVDSTTQIAGEVAETIEGNLGVTVTQDGTILEFGPSEPSYRELLQLVEQLRDIVFKGIEEVSRVVIRREETERGEEFVLYTEGSAFKKALKIEGVDATRTSCNNIHEVHKTLGIEAAREAIINETMTTLEEQGLDDVNIRHLMLVADIMTNDGTIESIGRHGISGNKNSVLARAAFEVTVNHLLDAAIHGESDDLDGVIENVIVGKPVRLGTGDVDLRMGATQTSD.

Belongs to the RNA polymerase beta' chain family. As to quaternary structure, part of the RNA polymerase complex.

It localises to the cytoplasm. It catalyses the reaction RNA(n) + a ribonucleoside 5'-triphosphate = RNA(n+1) + diphosphate. Its function is as follows. DNA-dependent RNA polymerase (RNAP) catalyzes the transcription of DNA into RNA using the four ribonucleoside triphosphates as substrates. Forms part of the jaw domain. The sequence is that of DNA-directed RNA polymerase subunit Rpo1C from Halobacterium salinarum (strain ATCC 29341 / DSM 671 / R1).